Here is a 67-residue protein sequence, read N- to C-terminus: Mu-conotoxin TsIIIA (67 aa).

The first 20 residues, 1-20, serve as a signal peptide directing secretion; the sequence is MMSKLGVLLTICLLLFPLTA. A propeptide spanning residues 21–48 is cleaved from the precursor; sequence VPLDGDQPADQPAERKQNEQHPLFDQKR. 3 cysteine pairs are disulfide-bonded: cysteine 50/cysteine 59, cysteine 51/cysteine 64, and cysteine 55/cysteine 65.

It belongs to the conotoxin M superfamily. Expressed by the venom duct.

The protein localises to the secreted. Functionally, mu-conotoxins block voltage-gated sodium channels (Nav). This toxin specifically inhibits mammalian Nav1.8/SCN10A sodium currents (IC(50)=2.11 uM) without inducing a shift in the current-voltage relationship of this channel. In vivo, shows potent analgesic activity in a mice hotplate analgesic assay. In addition, this toxin has better analgesic effects than Ziconotide, an analgesic drug. The protein is Mu-conotoxin TsIIIA of Conus tessulatus (Tessellate cone).